A 288-amino-acid chain; its full sequence is Phosphopantetheinyl transferase (288 aa).

CoA-binding positions include R60, 99–104 (RTEMGK), and 118–121 (NLSH). 2 residues coordinate Mg(2+): D139 and E196. 196 to 200 (EAYLK) is a CoA binding site.

It belongs to the P-Pant transferase superfamily. AcpS family. Monomer.

The protein resides in the cytoplasm. It is found in the cytosol. It carries out the reaction apo-[ACP] + CoA = holo-[ACP] + adenosine 3',5'-bisphosphate + H(+). It functions in the pathway lipid metabolism; fatty acid biosynthesis. Phosphopantetheinyl transferase that is essential for attaching phosphopantetheine to ACP domains of the polyunsaturated fatty acid (PUFA) synthase converting the inactive apo-synthase to the active holo-synthase. The chain is Phosphopantetheinyl transferase from Thraustochytrium sp. (strain ATCC 26185 / S-3).